Reading from the N-terminus, the 722-residue chain is Polyribonucleotide nucleotidyltransferase (722 aa).

Mg(2+) is bound by residues D495 and D501. Residues 562 to 621 (PRLLSFRIDPELIGTVIGPGGRTIKGITERTNTKIDIEDGGIVTIASHDGAAAEEAQRII) enclose the KH domain. An S1 motif domain is found at 631 to 699 (GEIFPGSITR…NRGRINLTLR (69 aa)). A disordered region spans residues 700 to 722 (GVSQNGGMSNYPEPTPTPVAPLT). Over residues 712–722 (EPTPTPVAPLT) the composition is skewed to pro residues.

It belongs to the polyribonucleotide nucleotidyltransferase family. Requires Mg(2+) as cofactor.

It is found in the cytoplasm. It carries out the reaction RNA(n+1) + phosphate = RNA(n) + a ribonucleoside 5'-diphosphate. Involved in mRNA degradation. Catalyzes the phosphorolysis of single-stranded polyribonucleotides processively in the 3'- to 5'-direction. The protein is Polyribonucleotide nucleotidyltransferase of Prochlorococcus marinus (strain NATL1A).